We begin with the raw amino-acid sequence, 122 residues long: Phosphoribosyl-ATP pyrophosphatase (122 aa).

It belongs to the PRA-PH family.

The protein resides in the cytoplasm. It catalyses the reaction 1-(5-phospho-beta-D-ribosyl)-ATP + H2O = 1-(5-phospho-beta-D-ribosyl)-5'-AMP + diphosphate + H(+). The protein operates within amino-acid biosynthesis; L-histidine biosynthesis; L-histidine from 5-phospho-alpha-D-ribose 1-diphosphate: step 2/9. The protein is Phosphoribosyl-ATP pyrophosphatase of Burkholderia mallei (strain NCTC 10247).